A 318-amino-acid polypeptide reads, in one-letter code: Olfactory receptor 2A2 (318 aa).

Residues Met-1–Ile-24 are Extracellular-facing. The N-linked (GlcNAc...) asparagine glycan is linked to Asn-4. The helical transmembrane segment at Leu-25 to Ile-48 threads the bilayer. Over Cys-49 to Thr-56 the chain is Cytoplasmic. A helical membrane pass occupies residues Pro-57–Pro-78. The Extracellular portion of the chain corresponds to Lys-79 to Gln-99. A helical membrane pass occupies residues Thr-100–Tyr-119. Residues Asp-120–Arg-138 lie on the Cytoplasmic side of the membrane. The helical transmembrane segment at Val-139–Val-157 threads the bilayer. Residues His-158–Asn-194 lie on the Extracellular side of the membrane. Residues Gln-195 to Met-218 traverse the membrane as a helical segment. Topologically, residues His-219 to Lys-235 are cytoplasmic. The chain crosses the membrane as a helical span at residues Ala-236 to Tyr-258. Residues Met-259 to Lys-271 are Extracellular-facing. A helical membrane pass occupies residues Met-272–Leu-291. Residues Arg-292–Met-310 are Cytoplasmic-facing.

This sequence belongs to the G-protein coupled receptor 1 family.

Its subcellular location is the cell membrane. In terms of biological role, odorant receptor. The polypeptide is Olfactory receptor 2A2 (OR2A2) (Homo sapiens (Human)).